Here is a 304-residue protein sequence, read N- to C-terminus: MTEARIIDGKAFAADLRGRIGAAVEHLRTAYALVPGLAVVLVGENPASQLYVKNKGEQTREAGMHSVTHRLPVDTTQEQLLRLIGQLNADPSIHGILVQLPLPPQIDPAAVLAAIDPDKDVDGFHVVNAGRLAVGLPGLVPCTPLGCLMLLKDVVGDLRGLNAVVVGRSNIVGKPMANLLLQANATVTVAHSHTVDLPEVCRGADILIAAVGRPEMIRGSWIKEGAIVIDVGINRVPARDPAAAAAGKTRVVGDVAFEEAKGIAGAITPVPGGVGPMTIACLLLNTLTAACRSKGITPPDDLMP.

NADP(+) contacts are provided by residues 167-169, Ser-192, and Ile-233; that span reads GRS.

Belongs to the tetrahydrofolate dehydrogenase/cyclohydrolase family. Homodimer.

It catalyses the reaction (6R)-5,10-methylene-5,6,7,8-tetrahydrofolate + NADP(+) = (6R)-5,10-methenyltetrahydrofolate + NADPH. The enzyme catalyses (6R)-5,10-methenyltetrahydrofolate + H2O = (6R)-10-formyltetrahydrofolate + H(+). Its pathway is one-carbon metabolism; tetrahydrofolate interconversion. Functionally, catalyzes the oxidation of 5,10-methylenetetrahydrofolate to 5,10-methenyltetrahydrofolate and then the hydrolysis of 5,10-methenyltetrahydrofolate to 10-formyltetrahydrofolate. This Rhodospirillum centenum (strain ATCC 51521 / SW) protein is Bifunctional protein FolD.